Reading from the N-terminus, the 102-residue chain is Large ribosomal subunit protein bL21 (102 aa).

It belongs to the bacterial ribosomal protein bL21 family. In terms of assembly, part of the 50S ribosomal subunit. Contacts protein L20.

Functionally, this protein binds to 23S rRNA in the presence of protein L20. The protein is Large ribosomal subunit protein bL21 of Geobacillus sp. (strain WCH70).